The following is a 213-amino-acid chain: Large ribosomal subunit protein uL1 (213 aa).

Belongs to the universal ribosomal protein uL1 family. Part of the 50S ribosomal subunit.

Functionally, binds directly to 23S rRNA. Probably involved in E site tRNA release. Its function is as follows. Protein L1 is also a translational repressor protein, it controls the translation of its operon by binding to its mRNA. The polypeptide is Large ribosomal subunit protein uL1 (Methanococcus maripaludis (strain DSM 14266 / JCM 13030 / NBRC 101832 / S2 / LL)).